The primary structure comprises 1403 residues: Envelopment polyprotein (1403 aa).

An N-terminal signal peptide occupies residues 1-17 (MLLNIVLISNLACLAFA). The Lumenal segment spans residues 18 to 209 (LPLKEGTRGS…ELMIESFCTN (192 aa)). N-linked (GlcNAc...) asparagine; by host glycosylation occurs at N40. Residues 210-230 (LELILLVTFILVGSVMMMILT) form a helical membrane-spanning segment. The Cytoplasmic segment spans residues 231-314 (KTYIVYVFIP…PKTRKLCKSK (84 aa)). A helical membrane pass occupies residues 315–335 (ISNIVLCVITSLIFFSFITPI). Residues 336–361 (SSQCIDIEKLPDEYITCKRELANIKS) lie on the Lumenal side of the membrane. Residues 362-382 (LTIDDTYSFIYSCTCIIVLIL) traverse the membrane as a helical segment. Topologically, residues 383 to 448 (LKKAAKYILY…FKFESSYNRT (66 aa)) are cytoplasmic. The helical transmembrane segment at 449–469 (GLIIFMLLLVPTIVMTQETSI) threads the bilayer. At 470–1361 (NCKNIQSTQL…GNLSFYWRLT (892 aa)) the chain is on the lumenal side. C471 and C487 are disulfide-bonded. N493 is a glycosylation site (N-linked (GlcNAc...) asparagine; by host). Cystine bridges form between C523–C550, C580–C589, and C591–C598. N-linked (GlcNAc...) asparagine; by host glycosylation is found at N686 and N1353. Residues 1362–1382 (IYIIISLIMLILFLYILIPLC) form a helical membrane-spanning segment. The Cytoplasmic segment spans residues 1383–1403 (KRLKGLLEYNERIYQMENKFK).

The protein belongs to the nairovirus envelope glycoprotein family. As to quaternary structure, heterodimer with glycoprotein C; in prefusion state. In terms of assembly, heterodimer with glycoprotein N; in prefusion state. Homotrimeric; in postfusion state. In terms of processing, specific enzymatic cleavage by host MBTPS1/S1P/SKI-1 endopeptidase yield glycoprotein N. Specific enzymatic cleavages by host furin-like protease and MBTPS1/S1P endopeptidase yield GP38. Post-translationally, glycosylated.

It is found in the host endoplasmic reticulum membrane. It localises to the virion membrane. Its subcellular location is the host Golgi apparatus membrane. Glycoprotein C and glycoprotein N interact with each other and are present at the surface of the virion. Glycoprotein N probably locks the Gn-Gc complex in a prefusion state. Glycoprotein N and glycoprotein C are able to attach the virion to host cell receptors. This attachment induces virion internalization predominantly through clathrin-dependent endocytosis. Functionally, glycoprotein C and glycoprotein N interact with each other and are present at the surface of the virion. The spikes at the surface of the virion are formed by an N-terminal extension of glycoprotein C. Glycoprotein N and glycoprotein C are able to attach the virion to host cell receptors. This attachment induces virion internalization predominantly through clathrin-dependent endocytosis. Class II fusion protein that promotes fusion of viral membrane with host endosomal membrane after endocytosis of the virion. Exposure to potassium is necessary for the conformational change leading to fusion. In Bos taurus (Bovine), this protein is Envelopment polyprotein (GP).